A 342-amino-acid polypeptide reads, in one-letter code: 3-isopropylmalate dehydrogenase (342 aa).

Positions 92, 102, 126, and 216 each coordinate substrate. Positions 216, 240, and 244 each coordinate Mg(2+). 276–288 (GSAPDIAGKGIAD) serves as a coordination point for NAD(+).

This sequence belongs to the isocitrate and isopropylmalate dehydrogenases family. LeuB type 2 subfamily. In terms of assembly, homodimer. Mg(2+) serves as cofactor. The cofactor is Mn(2+).

It is found in the cytoplasm. The enzyme catalyses (2R,3S)-3-isopropylmalate + NAD(+) = 4-methyl-2-oxopentanoate + CO2 + NADH. It functions in the pathway amino-acid biosynthesis; L-leucine biosynthesis; L-leucine from 3-methyl-2-oxobutanoate: step 3/4. Catalyzes the oxidation of 3-carboxy-2-hydroxy-4-methylpentanoate (3-isopropylmalate) to 3-carboxy-4-methyl-2-oxopentanoate. The product decarboxylates to 4-methyl-2 oxopentanoate. This is 3-isopropylmalate dehydrogenase from Corynebacterium kroppenstedtii (strain DSM 44385 / JCM 11950 / CIP 105744 / CCUG 35717).